Consider the following 237-residue polypeptide: Probable transcriptional regulatory protein NIS_0560 (237 aa).

Belongs to the TACO1 family.

The protein resides in the cytoplasm. In Nitratiruptor sp. (strain SB155-2), this protein is Probable transcriptional regulatory protein NIS_0560.